Here is a 147-residue protein sequence, read N- to C-terminus: NADH-quinone oxidoreductase subunit A (147 aa).

3 helical membrane passes run 11-31 (IWPLVAYFFLVVMLVVGVMAL), 68-88 (LIAVFFVIFDVEAVFLFAWAV), and 93-113 (LGWPGYIEAIIFISILGAALA).

This sequence belongs to the complex I subunit 3 family. NDH-1 is composed of 14 different subunits. Subunits NuoA, H, J, K, L, M, N constitute the membrane sector of the complex.

It localises to the cell inner membrane. The catalysed reaction is a quinone + NADH + 5 H(+)(in) = a quinol + NAD(+) + 4 H(+)(out). NDH-1 shuttles electrons from NADH, via FMN and iron-sulfur (Fe-S) centers, to quinones in the respiratory chain. The immediate electron acceptor for the enzyme in this species is believed to be ubiquinone. Couples the redox reaction to proton translocation (for every two electrons transferred, four hydrogen ions are translocated across the cytoplasmic membrane), and thus conserves the redox energy in a proton gradient. The protein is NADH-quinone oxidoreductase subunit A of Nitrosospira multiformis (strain ATCC 25196 / NCIMB 11849 / C 71).